The chain runs to 251 residues: Protein DEEPER ROOTING 1 (251 aa).

The IGT motif motif lies at 46–52 (SLLAIGT). Residues 64 to 105 (VENSSDNVQSVQDTVKFTEEEVDKIRKEFETLLAIKDQAEAQ) are a coiled coil.

Belongs to the LAZY family.

Functionally, involved in the control of root growth angle. Involved in cell elongation in the root tip that causes asymmetric root growth and downward bending of the root in response to gravity. The protein is Protein DEEPER ROOTING 1 of Oryza sativa subsp. japonica (Rice).